Consider the following 332-residue polypeptide: Malate dehydrogenase, cytoplasmic (332 aa).

NAD(+)-binding positions include 11 to 17 and Asp-42; that span reads GAAGQIA. Substrate-binding residues include Arg-92 and Arg-98. NAD(+)-binding positions include Asn-105, Gln-112, and 129-131; that span reads VGN. Residues Asn-131 and Arg-162 each contribute to the substrate site. The Proton acceptor role is filled by His-187.

This sequence belongs to the LDH/MDH superfamily. MDH type 2 family. Homodimer.

The protein resides in the cytoplasm. It catalyses the reaction (S)-malate + NAD(+) = oxaloacetate + NADH + H(+). By arsenate for both the forward and reverse reactions. Functionally, malate dehydrogenase. Has no activity with NADPH as substrate. Does not show lactate dehydrogenase activity. This chain is Malate dehydrogenase, cytoplasmic, found in Taenia solium (Pork tapeworm).